An 838-amino-acid chain; its full sequence is Kinesin-like protein KIFC2 (838 aa).

A compositionally biased stretch (low complexity) spans 23 to 32; the sequence is AAAAEPGDPA. Disordered stretches follow at residues 23-48 and 140-185; these read AAAA…DLPA and LLQG…GQQP. A compositionally biased stretch (polar residues) spans 156–167; it reads DGSTSQEESPSH. Residues 186-351 are a coiled coil; that stretch reads LQLEEDQRAW…SLRQGCGDLR (166 aa). The Kinesin motor domain maps to 409 to 740; that stretch reads NIRVLCRLRP…ARRSPRGRRI (332 aa). 484 to 491 lines the ATP pocket; it reads GQTGTGKT. A disordered region spans residues 718–792; it reads RSPPTRARPP…SPGPPAPLRR (75 aa).

Belongs to the TRAFAC class myosin-kinesin ATPase superfamily. Kinesin family.

The protein localises to the cytoplasm. The protein resides in the cytoskeleton. In terms of biological role, may play a role in microtubule-dependent retrograde axonal transport. May function as the motor for the transport of multivesicular body (MVB)-like organelles in dendrites. This Homo sapiens (Human) protein is Kinesin-like protein KIFC2 (KIFC2).